The chain runs to 208 residues: Putative adhesin P1-like protein MPN_468 (208 aa).

Disordered stretches follow at residues 29–49 (TNGS…VAPT) and 97–172 (DSKT…NLTP). Over residues 100–132 (TQNNTTTNENHTKFASATGSGQQQGSTTTTSAG) the composition is skewed to low complexity. Residues 145–158 (SGNSISVQEATSGD) show a composition bias toward polar residues. Residues 159 to 172 (NLTNYTNLPPNLTP) are compositionally biased toward low complexity.

The protein belongs to the adhesin P1 family.

The protein is Putative adhesin P1-like protein MPN_468 of Mycoplasma pneumoniae (strain ATCC 29342 / M129 / Subtype 1) (Mycoplasmoides pneumoniae).